Consider the following 299-residue polypeptide: Non-structural protein V (299 aa).

Residues 41-99 form a disordered region; sequence DNPGQERATCREEKAGSSGLSKPCLSAIGSTEGGAPRIRGQGPGESDDDAETLGIPPRN. Positions 110 to 120 are interaction with host STAT1; the sequence is YYVYDHSGEAV. The segment covering 134-145 has biased composition (low complexity); sequence GLDGDSTLSGGD. Residues 134–162 are disordered; it reads GLDGDSTLSGGDNESENSDVDIGEPDTEG. The segment covering 146–160 has biased composition (acidic residues); sequence NESENSDVDIGEPDT. Residues histidine 232, cysteine 251, cysteine 255, cysteine 267, cysteine 269, cysteine 272, cysteine 276, and cysteine 279 each contribute to the Zn(2+) site.

The protein belongs to the paramyxoviruses V protein family. In terms of assembly, interacts with host IFIH1/MDA5 and DHX58/LGP2; these interactions are involved in the inhibition of the host type I interferon signaling pathway. Interacts with host TYK2; this interaction inhibits the type I interferon signaling pathway without affecting the type II pathway. Interacts with host IRF7; this interaction inhibits IRF7 translocation to the nucleus. Interacts with host CHUK. Interacts with host RELA/p65; this interaction inhibits the nuclear translocation of NF-KappaB. Interacts (via N-terminus) with host STAT1 and JAK1; these interactions inhibit STAT1 phosphorylation by Jak1 and thereby the type I interferon signaling pathway. Interacts (via C-terminus) with host STAT2; this interaction is involved in the inhibition of the host type I interferon signaling pathway. Forms a complex with host PPP1CA and PPP1CC; this interaction prevents dephosphorylation of host IFIH1/MDA5 and leads to the inhibition of the host type I interferon signaling pathway. Interacts with host IRF9; this interaction prevents the binding of IRF9 to STAT2 and thereby the type I interferon signaling pathway.

The protein localises to the host cytoplasm. In terms of biological role, plays an essential role in the inhibition of host immune response. Prevents the establishment of cellular antiviral state by blocking interferon-alpha/beta (IFN-alpha/beta) production and signaling pathway. Interacts with host IFIH1/MDA5 and DHX58/LGP2 to inhibit the transduction pathway involved in the activation of IFN-beta promoter, thus protecting the virus against cell antiviral state. Blocks the type I interferon signaling pathway by interacting with host TYK2 and thereby inhibiting downstream STAT1 and STAT2 phosphorylation. Moderately affects the type II interferon signaling. In Measles virus (strain Edmonston-Schwarz vaccine) (MeV), this protein is Non-structural protein V (P/V).